The following is a 438-amino-acid chain: Trigger factor (438 aa).

The PPIase FKBP-type domain occupies 160–245 (DDKVVIDFVG…VKKIQEAQLP (86 aa)).

It belongs to the FKBP-type PPIase family. Tig subfamily.

It localises to the cytoplasm. It carries out the reaction [protein]-peptidylproline (omega=180) = [protein]-peptidylproline (omega=0). Functionally, involved in protein export. Acts as a chaperone by maintaining the newly synthesized protein in an open conformation. Functions as a peptidyl-prolyl cis-trans isomerase. This chain is Trigger factor, found in Francisella philomiragia subsp. philomiragia (strain ATCC 25017 / CCUG 19701 / FSC 153 / O#319-036).